The chain runs to 548 residues: MSSPPLHGLSSVGHLSRDPPPRSWSPRDKCSYLGLSHGNLRVHYKGHGKTSKDAASVRSTHPIPAACGIFYFEVKIISKGRDGYMGIGLSTQGVNLNRLPGWDKHSYGYHGDDGHSFCSSGTGQPYGPTFTTGDVIGCCVNLIDNTCFYTKNGHSLGIAFTDLPPNLYPTVGLQTPGEVVDANFGQSPFVFDIEDYIREWRSKIQAQIERFPVAGEWQSMIQRMVSSYLVHHGYCSTAEAFAKSTDQTVQEELASIKNRQRIQKLVLSGRMGEAIETTQQLYPSLLERNPNLLFTLKVRQFIEMVNGTDSEVRCLGNRSLKSPDGCLGSDSNCSNGIISNKAHQTHCHSKSQSSNLNVTELNSINMTMSHQLNSYSSNDVEMETDHYSNGFSASTSNGFLNGSSRHEPELEECDTEMEVDTSHGRRQLCGGSQAAVERMICFGRELQAMSEQLRRERGKNATNKNMLKDAFSLLAYSDPWNSPVGYQLDPIQREHVCSSLNSAILDIHNLPKQPPLSLALEQASQCLEMMAQCGIGSCAFARVADYLH.

The tract at residues Met1–Ser23 is disordered. A B30.2/SPRY domain is found at Ser2–Phe189. Positions Trp217–Val249 constitute a LisH domain. Positions Ser255–Val312 constitute a CTLH domain.

The protein belongs to the RANBP9/10 family. Identified in the CTLH complex that contains at least MAEA, RMND5A (or alternatively its paralog RMND5B), GID8, WDR26, and RANBP9 and/or RANBP10.

It localises to the cytoplasm. It is found in the cell membrane. The protein localises to the nucleus. Its function is as follows. May act as scaffolding protein, and as adapter protein to couple membrane receptors to intracellular signaling pathways. Acts as a mediator of cell spreading and actin cytoskeleton rearrangement. Core component of the CTLH E3 ubiquitin-protein ligase complex that mediates ubiquitination and subsequent proteasomal degradation of target proteins. The chain is Ran-binding protein 9 (ranbp9) from Xenopus laevis (African clawed frog).